The following is an 874-amino-acid chain: Alanine--tRNA ligase (874 aa).

Zn(2+)-binding residues include His564, His568, Cys665, and His669.

Belongs to the class-II aminoacyl-tRNA synthetase family. Zn(2+) serves as cofactor.

The protein resides in the cytoplasm. It catalyses the reaction tRNA(Ala) + L-alanine + ATP = L-alanyl-tRNA(Ala) + AMP + diphosphate. Catalyzes the attachment of alanine to tRNA(Ala) in a two-step reaction: alanine is first activated by ATP to form Ala-AMP and then transferred to the acceptor end of tRNA(Ala). Also edits incorrectly charged Ser-tRNA(Ala) and Gly-tRNA(Ala) via its editing domain. The chain is Alanine--tRNA ligase from Polaromonas naphthalenivorans (strain CJ2).